A 290-amino-acid polypeptide reads, in one-letter code: 33 kDa chaperonin (290 aa).

2 disulfides stabilise this stretch: Cys-235–Cys-237 and Cys-268–Cys-271.

This sequence belongs to the HSP33 family. Under oxidizing conditions two disulfide bonds are formed involving the reactive cysteines. Under reducing conditions zinc is bound to the reactive cysteines and the protein is inactive.

The protein resides in the cytoplasm. In terms of biological role, redox regulated molecular chaperone. Protects both thermally unfolding and oxidatively damaged proteins from irreversible aggregation. Plays an important role in the bacterial defense system toward oxidative stress. This chain is 33 kDa chaperonin, found in Streptococcus pyogenes serotype M2 (strain MGAS10270).